A 607-amino-acid polypeptide reads, in one-letter code: Elongation factor 4 (607 aa).

The tr-type G domain maps to 11–193; that stretch reads EKIRNFSIIA…QIVEKVPAPT (183 aa). Residues 23–28 and 140–143 each bind GTP; these read DHGKST and NKID.

Belongs to the TRAFAC class translation factor GTPase superfamily. Classic translation factor GTPase family. LepA subfamily.

The protein localises to the cell membrane. The enzyme catalyses GTP + H2O = GDP + phosphate + H(+). Functionally, required for accurate and efficient protein synthesis under certain stress conditions. May act as a fidelity factor of the translation reaction, by catalyzing a one-codon backward translocation of tRNAs on improperly translocated ribosomes. Back-translocation proceeds from a post-translocation (POST) complex to a pre-translocation (PRE) complex, thus giving elongation factor G a second chance to translocate the tRNAs correctly. Binds to ribosomes in a GTP-dependent manner. This chain is Elongation factor 4, found in Streptococcus pneumoniae (strain Hungary19A-6).